Consider the following 358-residue polypeptide: Aminomethyltransferase (358 aa).

This sequence belongs to the GcvT family. In terms of assembly, the glycine cleavage system is composed of four proteins: P, T, L and H.

It carries out the reaction N(6)-[(R)-S(8)-aminomethyldihydrolipoyl]-L-lysyl-[protein] + (6S)-5,6,7,8-tetrahydrofolate = N(6)-[(R)-dihydrolipoyl]-L-lysyl-[protein] + (6R)-5,10-methylene-5,6,7,8-tetrahydrofolate + NH4(+). Its function is as follows. The glycine cleavage system catalyzes the degradation of glycine. This Francisella philomiragia subsp. philomiragia (strain ATCC 25017 / CCUG 19701 / FSC 153 / O#319-036) protein is Aminomethyltransferase.